A 205-amino-acid polypeptide reads, in one-letter code: LexA repressor (205 aa).

The segment at residues 28-48 is a DNA-binding region (H-T-H motif); it reads RAEIAKRLGFKSANAAEEHLK. Catalysis depends on for autocatalytic cleavage activity residues serine 122 and lysine 159.

Belongs to the peptidase S24 family. Homodimer.

It catalyses the reaction Hydrolysis of Ala-|-Gly bond in repressor LexA.. In terms of biological role, represses a number of genes involved in the response to DNA damage (SOS response), including recA and lexA. In the presence of single-stranded DNA, RecA interacts with LexA causing an autocatalytic cleavage which disrupts the DNA-binding part of LexA, leading to derepression of the SOS regulon and eventually DNA repair. The chain is LexA repressor from Shewanella woodyi (strain ATCC 51908 / MS32).